Reading from the N-terminus, the 296-residue chain is 4-hydroxy-tetrahydrodipicolinate synthase (296 aa).

Residue Thr49 participates in pyruvate binding. Tyr137 (proton donor/acceptor) is an active-site residue. Lys166 acts as the Schiff-base intermediate with substrate in catalysis. Ile208 is a binding site for pyruvate.

The protein belongs to the DapA family. In terms of assembly, homotetramer; dimer of dimers.

The protein resides in the cytoplasm. The enzyme catalyses L-aspartate 4-semialdehyde + pyruvate = (2S,4S)-4-hydroxy-2,3,4,5-tetrahydrodipicolinate + H2O + H(+). Its pathway is amino-acid biosynthesis; L-lysine biosynthesis via DAP pathway; (S)-tetrahydrodipicolinate from L-aspartate: step 3/4. Catalyzes the condensation of (S)-aspartate-beta-semialdehyde [(S)-ASA] and pyruvate to 4-hydroxy-tetrahydrodipicolinate (HTPA). The chain is 4-hydroxy-tetrahydrodipicolinate synthase from Pelodictyon phaeoclathratiforme (strain DSM 5477 / BU-1).